We begin with the raw amino-acid sequence, 218 residues long: MTTTVKRRARIGIMGGTFDPIHNGHLVAGSEVADRFDLDLVVYVPTGQPWQKANKKVSPAEDRYLMTVIATASNPRFMVSRVDIDRGGDTYTIDTLQDLSKQYPDAQLYFITGADALAQIVTWRDWEKTFELAHFVGVTRPGYELDGNIIPEMHQDRVSLVDIPAMAISSTDCRERSSEERPVWYLVPDGVVQYIAKRQLYRPEGSDKDMDPKGQNQA.

Belongs to the NadD family.

It catalyses the reaction nicotinate beta-D-ribonucleotide + ATP + H(+) = deamido-NAD(+) + diphosphate. The protein operates within cofactor biosynthesis; NAD(+) biosynthesis; deamido-NAD(+) from nicotinate D-ribonucleotide: step 1/1. Catalyzes the reversible adenylation of nicotinate mononucleotide (NaMN) to nicotinic acid adenine dinucleotide (NaAD). The protein is Probable nicotinate-nucleotide adenylyltransferase of Corynebacterium glutamicum (strain ATCC 13032 / DSM 20300 / JCM 1318 / BCRC 11384 / CCUG 27702 / LMG 3730 / NBRC 12168 / NCIMB 10025 / NRRL B-2784 / 534).